The chain runs to 559 residues: TBC1 domain family member 24 (559 aa).

A 1,2-diacyl-sn-glycero-3-phospho-(1D-myo-inositol)-binding positions include Lys36, Arg40, Lys238, Arg242, and 293–297; that span reads RLFSR. Positions 47–262 constitute a Rab-GAP TBC domain; sequence SHALRGKVYQ…KVRAGQPLES (216 aa). The TLDc domain occupies 343–554; the sequence is EIVSVREMRD…IAAVEAWGFQ (212 aa). A phosphoserine mark is found at Ser473 and Ser480.

In terms of assembly, interacts with ARF6. As to expression, highest expression in brain.

It is found in the cell membrane. The protein resides in the cytoplasm. It localises to the cytoplasmic vesicle membrane. Its subcellular location is the presynapse. May act as a GTPase-activating protein for Rab family protein(s). Involved in neuronal projections development, probably through a negative modulation of ARF6 function. Involved in the regulation of synaptic vesicle trafficking. The sequence is that of TBC1 domain family member 24 (TBC1D24) from Homo sapiens (Human).